Here is a 424-residue protein sequence, read N- to C-terminus: Serine--tRNA ligase (424 aa).

231 to 233 (TAE) contacts L-serine. ATP is bound at residue 262-264 (RSE). L-serine is bound at residue Glu285. 349 to 352 (EISS) provides a ligand contact to ATP. Ser385 lines the L-serine pocket.

It belongs to the class-II aminoacyl-tRNA synthetase family. Type-1 seryl-tRNA synthetase subfamily. In terms of assembly, homodimer. The tRNA molecule binds across the dimer.

It localises to the cytoplasm. It catalyses the reaction tRNA(Ser) + L-serine + ATP = L-seryl-tRNA(Ser) + AMP + diphosphate + H(+). The enzyme catalyses tRNA(Sec) + L-serine + ATP = L-seryl-tRNA(Sec) + AMP + diphosphate + H(+). It participates in aminoacyl-tRNA biosynthesis; selenocysteinyl-tRNA(Sec) biosynthesis; L-seryl-tRNA(Sec) from L-serine and tRNA(Sec): step 1/1. Functionally, catalyzes the attachment of serine to tRNA(Ser). Is also able to aminoacylate tRNA(Sec) with serine, to form the misacylated tRNA L-seryl-tRNA(Sec), which will be further converted into selenocysteinyl-tRNA(Sec). The polypeptide is Serine--tRNA ligase (Marinobacter nauticus (strain ATCC 700491 / DSM 11845 / VT8) (Marinobacter aquaeolei)).